Reading from the N-terminus, the 670-residue chain is Leiomodin-3 (670 aa).

Disordered regions lie at residues 34-72 (EMDDIAPDERVPVGLRQKDASHEMTVRDCTEPESEEEID), 94-120 (EIAPDERVPVGMRQRDQTDKPPTGSFD), 139-165 (EEERVPTTLLPSQKTNEEHEAKNEDKV), and 202-274 (EDKV…NWVP). 5 stretches are compositionally biased toward basic and acidic residues: residues 40 to 63 (PDERVPVGLRQKDASHEMTVRDCT), 97 to 112 (PDERVPVGMRQRDQTD), 153 to 163 (TNEEHEAKNED), 205 to 214 (VCDKPVKTDL), and 249 to 261 (TETKVNEEKKEDS). The stretch at 150–183 (SQKTNEEHEAKNEDKVEELELVYEEIVEEVEGGQ) forms a coiled coil. A coiled-coil region spans residues 464–494 (DRQRQQRMEEQKLQQMKEQRKVMEMYEDSLN). The segment at 517–556 (NGAEDIPEDSPEPSPQPSPPHQLCKTQHLAPQQHPPNLST) is disordered. Residues 637–656 (PRDHLLSEIRQSNVAYLKAV) form the WH2 domain.

The protein belongs to the tropomodulin family. In terms of tissue distribution, expressed in muscle (at protein level).

The protein resides in the cytoplasm. It localises to the myofibril. The protein localises to the sarcomere. Its subcellular location is the a band. It is found in the m line. The protein resides in the cytoskeleton. Its function is as follows. Essential for the organization of sarcomeric thin filaments in skeletal muscle. This Danio rerio (Zebrafish) protein is Leiomodin-3.